The chain runs to 364 residues: Phospho-N-acetylmuramoyl-pentapeptide-transferase (364 aa).

Helical transmembrane passes span 18–38 (SLLI…AQIL), 48–68 (LFPL…VVPV), 91–111 (GTPT…ALIW), 114–134 (LDPA…IGWI), 154–174 (LILQ…TQSA), 183–203 (GQII…VLVA), 214–234 (VDGL…ALMA), 237–257 (NPGL…FIVH), 280–300 (AIGI…IFFV), and 343–363 (TQIV…AVIS).

It belongs to the glycosyltransferase 4 family. MraY subfamily. The cofactor is Mg(2+).

Its subcellular location is the cell inner membrane. It catalyses the reaction UDP-N-acetyl-alpha-D-muramoyl-L-alanyl-gamma-D-glutamyl-meso-2,6-diaminopimeloyl-D-alanyl-D-alanine + di-trans,octa-cis-undecaprenyl phosphate = di-trans,octa-cis-undecaprenyl diphospho-N-acetyl-alpha-D-muramoyl-L-alanyl-D-glutamyl-meso-2,6-diaminopimeloyl-D-alanyl-D-alanine + UMP. The protein operates within cell wall biogenesis; peptidoglycan biosynthesis. Catalyzes the initial step of the lipid cycle reactions in the biosynthesis of the cell wall peptidoglycan: transfers peptidoglycan precursor phospho-MurNAc-pentapeptide from UDP-MurNAc-pentapeptide onto the lipid carrier undecaprenyl phosphate, yielding undecaprenyl-pyrophosphoryl-MurNAc-pentapeptide, known as lipid I. In Rippkaea orientalis (strain PCC 8801 / RF-1) (Cyanothece sp. (strain PCC 8801)), this protein is Phospho-N-acetylmuramoyl-pentapeptide-transferase.